Consider the following 150-residue polypeptide: Large ribosomal subunit protein uL11 (150 aa).

Belongs to the universal ribosomal protein uL11 family. As to quaternary structure, part of the ribosomal stalk of the 50S ribosomal subunit. Interacts with L10 and the large rRNA to form the base of the stalk. L10 forms an elongated spine to which L12 dimers bind in a sequential fashion forming a multimeric L10(L12)X complex. One or more lysine residues are methylated.

Its function is as follows. Forms part of the ribosomal stalk which helps the ribosome interact with GTP-bound translation factors. The protein is Large ribosomal subunit protein uL11 of Ureaplasma urealyticum serovar 10 (strain ATCC 33699 / Western).